The following is a 695-amino-acid chain: Eukaryotic translation initiation factor 3 subunit B (695 aa).

Basic and acidic residues predominate over residues 1–10; it reads MAKKKGDEKA. The tract at residues 1 to 43 is disordered; it reads MAKKKGDEKANPAPQSDNEEQNFEEEPDFDDPEDFVEIPEEEL. Positions 17 to 43 are enriched in acidic residues; it reads DNEEQNFEEEPDFDDPEDFVEIPEEEL. In terms of domain architecture, RRM spans 60–144; sequence NVVVVDGCPQ…HTFLVNLFTD (85 aa). 4 WD repeats span residues 164–205, 295–335, 338–373, and 444–486; these read KVQS…PLLL, PPDE…LLDK, IKIP…TLLE, and EIKE…APTL.

This sequence belongs to the eIF-3 subunit B family. As to quaternary structure, component of the eukaryotic translation initiation factor 3 (eIF-3) complex.

The protein localises to the cytoplasm. Functionally, RNA-binding component of the eukaryotic translation initiation factor 3 (eIF-3) complex, which is involved in protein synthesis of a specialized repertoire of mRNAs and, together with other initiation factors, stimulates binding of mRNA and methionyl-tRNAi to the 40S ribosome. The eIF-3 complex specifically targets and initiates translation of a subset of mRNAs involved in cell proliferation. This chain is Eukaryotic translation initiation factor 3 subunit B, found in Bombyx mori (Silk moth).